The primary structure comprises 73 residues: uncharacterized protein (73 aa).

2 helical membrane-spanning segments follow: residues 10-30 and 42-62; these read ILLA…YVSA and YSTV…IYLI.

The protein resides in the cell membrane. This is an uncharacterized protein from Archaeoglobus fulgidus (strain ATCC 49558 / DSM 4304 / JCM 9628 / NBRC 100126 / VC-16).